We begin with the raw amino-acid sequence, 600 residues long: Adenine deaminase (600 aa).

It belongs to the metallo-dependent hydrolases superfamily. Adenine deaminase family. Mn(2+) serves as cofactor.

It catalyses the reaction adenine + H2O + H(+) = hypoxanthine + NH4(+). The chain is Adenine deaminase from Roseobacter denitrificans (strain ATCC 33942 / OCh 114) (Erythrobacter sp. (strain OCh 114)).